A 232-amino-acid polypeptide reads, in one-letter code: 2,3-bisphosphoglycerate-dependent phosphoglycerate mutase (232 aa).

Residues 10 to 17 (RHGESQWN), 23 to 24 (TG), Arg62, 89 to 92 (ERHY), Lys100, 116 to 117 (RR), and 185 to 186 (GN) each bind substrate. The Tele-phosphohistidine intermediate role is filled by His11. Residue Glu89 is the Proton donor/acceptor of the active site.

Belongs to the phosphoglycerate mutase family. BPG-dependent PGAM subfamily. Homodimer.

The enzyme catalyses (2R)-2-phosphoglycerate = (2R)-3-phosphoglycerate. It functions in the pathway carbohydrate degradation; glycolysis; pyruvate from D-glyceraldehyde 3-phosphate: step 3/5. Its function is as follows. Catalyzes the interconversion of 2-phosphoglycerate and 3-phosphoglycerate. In Blochmanniella floridana, this protein is 2,3-bisphosphoglycerate-dependent phosphoglycerate mutase.